The chain runs to 191 residues: Cell division protein SepF (191 aa).

A compositionally biased stretch (polar residues) spans 157–178 (YLNESPAQPVQTTTSFGRTATP). The tract at residues 157 to 191 (YLNESPAQPVQTTTSFGRTATPTPAWGTDSRYAAQ) is disordered.

It belongs to the SepF family. In terms of assembly, homodimer. Interacts with FtsZ.

The protein resides in the cytoplasm. Cell division protein that is part of the divisome complex and is recruited early to the Z-ring. Probably stimulates Z-ring formation, perhaps through the cross-linking of FtsZ protofilaments. Its function overlaps with FtsA. This is Cell division protein SepF from Synechococcus elongatus (strain ATCC 33912 / PCC 7942 / FACHB-805) (Anacystis nidulans R2).